The following is a 314-amino-acid chain: Formate-nitrite transporter (314 aa).

The Cytoplasmic segment spans residues 1 to 47 (MQKSTSKYVIDPISIKTNCSSEESYIRCVEYGKGKAHYRNLILLAKA). The chain crosses the membrane as a helical span at residues 48–68 (ILAGVFVGVCAHASGIAGGLF). Over 69–77 (YYHKLREYV) the chain is Extracellular. A helical membrane pass occupies residues 78 to 98 (GISMSAFVYGFTFPIAFLCII). The Cytoplasmic segment spans residues 99–128 (CTGSDLFTGNTLAVTTALLQKKLGLLCYMR). Residues 129–149 (VMCISLVGNYIGAVAFAFFVS) traverse the membrane as a helical segment. Residues 150-185 (YGSGAFSINTDTSKNHIFQFLNDIAIKKVSHSFIEC) are Extracellular-facing. A helical transmembrane segment spans residues 186–206 (ICLAIGCNIFVCLAVYFVLSI). The Cytoplasmic segment spans residues 207–211 (KDGSG). The chain crosses the membrane as a helical span at residues 212-232 (LVFSVFFAVYAFAIAGYEHII). Residues 233–260 (ANIYTLNLALMISNDISFTQVYFKNLLP) are Extracellular-facing. Residues 261-281 (TLIGNYIAGGLVLAFPLFFIY) form a helical membrane-spanning segment. At 282 to 314 (RSCYYDYDKMNDELNTVVLKTLSLELQNESNHI) the chain is on the cytoplasmic side.

Belongs to the FNT transporter (TC 1.A.16) family. In terms of assembly, homopentamer.

It localises to the cell membrane. It is found in the vacuole membrane. The enzyme catalyses (S)-lactate(in) + H(+)(in) = (S)-lactate(out) + H(+)(out). It catalyses the reaction formate(in) + H(+)(in) = formate(out) + H(+)(out). It carries out the reaction pyruvate(out) + H(+)(out) = pyruvate(in) + H(+)(in). The catalysed reaction is acetate(out) + H(+)(out) = acetate(in) + H(+)(in). With respect to regulation, inhibited by the Malaria Box compound MMV007839 and its derivatives BH296 and BH267.meta. In terms of biological role, monocarboxylate-proton symporter that mediates the efflux of the waste product lactate in the intraerythrocytic parasites; active in acidic-to-neutral pH range. Transports L-lactate. The chain is Formate-nitrite transporter from Plasmodium malariae.